Consider the following 162-residue polypeptide: Transcription elongation factor GreA (162 aa).

Positions 45 to 74 (ENAEYEAAREKQAFIEGRIKELEDMTARAE) form a coiled coil.

This sequence belongs to the GreA/GreB family.

Necessary for efficient RNA polymerase transcription elongation past template-encoded arresting sites. The arresting sites in DNA have the property of trapping a certain fraction of elongating RNA polymerases that pass through, resulting in locked ternary complexes. Cleavage of the nascent transcript by cleavage factors such as GreA or GreB allows the resumption of elongation from the new 3'terminus. GreA releases sequences of 2 to 3 nucleotides. This is Transcription elongation factor GreA from Rickettsia conorii (strain ATCC VR-613 / Malish 7).